Consider the following 181-residue polypeptide: Oligoribonuclease (181 aa).

Residues 8–171 (LIWVDLEMTG…DDIHDSIAEL (164 aa)) enclose the Exonuclease domain. The active site involves Tyr-129.

This sequence belongs to the oligoribonuclease family.

It is found in the cytoplasm. In terms of biological role, 3'-to-5' exoribonuclease specific for small oligoribonucleotides. The sequence is that of Oligoribonuclease from Photobacterium profundum (strain SS9).